The following is a 341-amino-acid chain: HMG box-containing protein C10F6.08c (341 aa).

A compositionally biased stretch (basic and acidic residues) spans 68-77; that stretch reads SEAKSREFGQ. 2 disordered regions span residues 68–195 and 236–341; these read SEAK…SNAK and LTEE…SSNA. 2 stretches are compositionally biased toward polar residues: residues 116–157 and 165–177; these read DTNV…QVVQ and NTDP…ITNL. A compositionally biased stretch (low complexity) spans 178–195; that stretch reads KTESSKSSGAKKATSNAK. Residues 195-263 constitute a DNA-binding region (HMG box); the sequence is KITDTMLFNH…KAREARRRRS (69 aa). 2 stretches are compositionally biased toward basic and acidic residues: residues 238 to 256 and 269 to 304; these read EEEK…EKAR and KLEK…GQKE. Residues T314 and T315 each carry the phosphothreonine modification. Phosphoserine is present on S316.

It is found in the nucleus. This is HMG box-containing protein C10F6.08c from Schizosaccharomyces pombe (strain 972 / ATCC 24843) (Fission yeast).